A 295-amino-acid chain; its full sequence is Nucleotide-binding protein YvcJ (295 aa).

ATP is bound at residue 16-23 (GMSGAGKT). A GTP-binding site is contributed by 67–70 (DLRG).

Belongs to the RapZ-like family.

Displays ATPase and GTPase activities. Can also hydrolyze pNPP. May affect the expression of competence via the phosphorylation of a cellular component. This chain is Nucleotide-binding protein YvcJ (yvcJ), found in Bacillus subtilis (strain 168).